Here is an 854-residue protein sequence, read N- to C-terminus: MAGPGYDRVDSKDDEPPNIQIPSRTYGFPPEAFDWSRLPDFDTNFLPPEHVEAFIQALSAPDPIPPTPDGGATGSSSYRLNSPAWHRGSTTSFDLDLARRPESSGVGFHDEDRTARDSPAGAATAAAAGVATPGPPLSRRASSNSLFISARNDWAPISQRRVARAKTAPQSSSRNDKKKKRARSKDETREGYLYPLLKWPLLGVVTCWLVGLSVVHVLARLYITVYERYWAWRGERGRLRRAMRATARYSDWVAAARRMDDFLGNDSWKVDDAFAYYDNKTVRRVLAEMRRSRRRAEEAGGRDTEQGREAIEDLKVLIEACVKNNFAGIENPRLYSQTYYGTKNLVQNFIDEVERSLKFLVETERLSKEEKRVMFKGICANYGRTALCLSGGATFAYYHFGVVKALLEEDYLPDIITGTSGGALVAALVATRTNEELKELLIPALACRITACREPISVWFRRWWATGARFDSVDWARQCAWWTRGSLTFREAYERTGRILNVSCVPADQHSPTILCNYLTSPDCVIWSAVLASAAVPGILNPVVLLMKTRSGQLLPYSFGHKWKDGSLRTDIPIKALNLQFNVNFTIVSQVNPHINLFFFSSRGSVGQPVTHRRGRGWRGGYLGTVLVQFTKLDLTKWLRVLRSLELLPRPLGQDWSLLWLQDFGGTVTVWPRCLLSDFARILSDPDPARLARMIHEGQQSAFPKLRFVANRLRVERLVERGRRENRRGGGLGDGGVGSSGGAGGGAGGGQAEAVAGQAAGPGTGQRRPSFESILSEDDLRSLLKKRRVERGGIGSGETESEDETSDLDADFYEGITYDGGDDDAGLEFGAAGMRQPGVATPAGLGGVERGDLS.

Disordered regions lie at residues 1–29 (MAGP…YGFP), 58–138 (LSAP…PPLS), and 159–186 (QRRV…RSKD). The segment covering 96-116 (DLARRPESSGVGFHDEDRTAR) has biased composition (basic and acidic residues). Low complexity predominate over residues 119 to 132 (PAGAATAAAAGVAT). The chain crosses the membrane as a helical span at residues 199 to 219 (WPLLGVVTCWLVGLSVVHVLA). A PNPLA domain is found at 387–578 (LCLSGGATFA…RTDIPIKALN (192 aa)). The GXSXG motif lies at 418–422 (GTSGG). The active-site Nucleophile is the S420. The Proton acceptor role is filled by D565. Disordered stretches follow at residues 724–776 (RENR…SILS) and 791–830 (RGGI…LEFG). A compositionally biased stretch (gly residues) spans 729–751 (GGGLGDGGVGSSGGAGGGAGGGQ). The segment covering 752–761 (AEAVAGQAAG) has biased composition (low complexity). Residues 799 to 812 (TESEDETSDLDADF) are compositionally biased toward acidic residues.

This sequence belongs to the PLPL family.

The protein resides in the membrane. Its function is as follows. Probable lipid hydrolase. The chain is Patatin-like phospholipase domain-containing protein CHGG_02900 from Chaetomium globosum (strain ATCC 6205 / CBS 148.51 / DSM 1962 / NBRC 6347 / NRRL 1970) (Soil fungus).